The primary structure comprises 506 residues: Deoxyguanosinetriphosphate triphosphohydrolase (506 aa).

The HD domain maps to 66-274 (RLTHSLEVQQ…MEAADDISYC (209 aa)).

The protein belongs to the dGTPase family. Type 1 subfamily. As to quaternary structure, homotetramer. Mg(2+) is required as a cofactor.

It catalyses the reaction dGTP + H2O = 2'-deoxyguanosine + triphosphate + H(+). Functionally, dGTPase preferentially hydrolyzes dGTP over the other canonical NTPs. The protein is Deoxyguanosinetriphosphate triphosphohydrolase of Yersinia pseudotuberculosis serotype O:3 (strain YPIII).